Reading from the N-terminus, the 466-residue chain is Asparagine--tRNA ligase (466 aa).

The protein belongs to the class-II aminoacyl-tRNA synthetase family. Homodimer.

It localises to the cytoplasm. It carries out the reaction tRNA(Asn) + L-asparagine + ATP = L-asparaginyl-tRNA(Asn) + AMP + diphosphate + H(+). The chain is Asparagine--tRNA ligase from Aeromonas hydrophila subsp. hydrophila (strain ATCC 7966 / DSM 30187 / BCRC 13018 / CCUG 14551 / JCM 1027 / KCTC 2358 / NCIMB 9240 / NCTC 8049).